A 294-amino-acid polypeptide reads, in one-letter code: Pyridoxal 5'-phosphate synthase subunit PdxS (294 aa).

Asp24 provides a ligand contact to D-ribose 5-phosphate. Lys81 (schiff-base intermediate with D-ribose 5-phosphate) is an active-site residue. Gly153 contributes to the D-ribose 5-phosphate binding site. Position 165 (Arg165) interacts with D-glyceraldehyde 3-phosphate. D-ribose 5-phosphate-binding positions include Gly214 and 235-236; that span reads GS.

This sequence belongs to the PdxS/SNZ family. As to quaternary structure, homohexamer and homododecamer. In the presence of PdxT, forms a dodecamer of heterodimers.

It carries out the reaction aldehydo-D-ribose 5-phosphate + D-glyceraldehyde 3-phosphate + L-glutamine = pyridoxal 5'-phosphate + L-glutamate + phosphate + 3 H2O + H(+). The protein operates within cofactor biosynthesis; pyridoxal 5'-phosphate biosynthesis. Its function is as follows. Catalyzes the formation of pyridoxal 5'-phosphate from ribose 5-phosphate (RBP), glyceraldehyde 3-phosphate (G3P) and ammonia. The ammonia is provided by the PdxT subunit. Can also use ribulose 5-phosphate and dihydroxyacetone phosphate as substrates, resulting from enzyme-catalyzed isomerization of RBP and G3P, respectively. This is Pyridoxal 5'-phosphate synthase subunit PdxS from Bacillus subtilis (strain 168).